The chain runs to 417 residues: NADH-quinone oxidoreductase subunit D (417 aa).

Belongs to the complex I 49 kDa subunit family. As to quaternary structure, NDH-1 is composed of 14 different subunits. Subunits NuoB, C, D, E, F, and G constitute the peripheral sector of the complex.

The protein resides in the cell inner membrane. It carries out the reaction a quinone + NADH + 5 H(+)(in) = a quinol + NAD(+) + 4 H(+)(out). In terms of biological role, NDH-1 shuttles electrons from NADH, via FMN and iron-sulfur (Fe-S) centers, to quinones in the respiratory chain. The immediate electron acceptor for the enzyme in this species is believed to be ubiquinone. Couples the redox reaction to proton translocation (for every two electrons transferred, four hydrogen ions are translocated across the cytoplasmic membrane), and thus conserves the redox energy in a proton gradient. The protein is NADH-quinone oxidoreductase subunit D of Polaromonas sp. (strain JS666 / ATCC BAA-500).